Here is a 338-residue protein sequence, read N- to C-terminus: Eukaryotic translation initiation factor 3 subunit H (338 aa).

Positions 22 to 154 (VQCDGLAVMK…LKAYRLTPQA (133 aa)) constitute an MPN domain.

It belongs to the eIF-3 subunit H family. As to quaternary structure, component of the eukaryotic translation initiation factor 3 (eIF-3) complex. The eIF-3 complex interacts with pix. Interacts with mxt.

It is found in the cytoplasm. Its function is as follows. Component of the eukaryotic translation initiation factor 3 (eIF-3) complex, which is involved in protein synthesis of a specialized repertoire of mRNAs and, together with other initiation factors, stimulates binding of mRNA and methionyl-tRNAi to the 40S ribosome. The eIF-3 complex specifically targets and initiates translation of a subset of mRNAs involved in cell proliferation. The chain is Eukaryotic translation initiation factor 3 subunit H from Drosophila sechellia (Fruit fly).